We begin with the raw amino-acid sequence, 118 residues long: Ribonuclease P protein component (118 aa).

It belongs to the RnpA family. As to quaternary structure, consists of a catalytic RNA component (M1 or rnpB) and a protein subunit.

It catalyses the reaction Endonucleolytic cleavage of RNA, removing 5'-extranucleotides from tRNA precursor.. RNaseP catalyzes the removal of the 5'-leader sequence from pre-tRNA to produce the mature 5'-terminus. It can also cleave other RNA substrates such as 4.5S RNA. The protein component plays an auxiliary but essential role in vivo by binding to the 5'-leader sequence and broadening the substrate specificity of the ribozyme. The protein is Ribonuclease P protein component of Vibrio vulnificus (strain CMCP6).